The primary structure comprises 323 residues: Phosphate acyltransferase (323 aa).

It belongs to the PlsX family. In terms of assembly, homodimer. Probably interacts with PlsY.

The protein resides in the cytoplasm. The enzyme catalyses a fatty acyl-[ACP] + phosphate = an acyl phosphate + holo-[ACP]. The protein operates within lipid metabolism; phospholipid metabolism. Catalyzes the reversible formation of acyl-phosphate (acyl-PO(4)) from acyl-[acyl-carrier-protein] (acyl-ACP). This enzyme utilizes acyl-ACP as fatty acyl donor, but not acyl-CoA. The protein is Phosphate acyltransferase of Finegoldia magna (strain ATCC 29328 / DSM 20472 / WAL 2508) (Peptostreptococcus magnus).